The primary structure comprises 431 residues: Histidinol dehydrogenase 1 (431 aa).

3 residues coordinate NAD(+): Tyr-127, Gln-188, and Asn-211. Substrate-binding residues include Ser-234, Gln-256, and His-259. Positions 256 and 259 each coordinate Zn(2+). Catalysis depends on proton acceptor residues Glu-324 and His-325. Substrate is bound by residues His-325, Asp-358, Glu-412, and His-417. Asp-358 is a Zn(2+) binding site. A Zn(2+)-binding site is contributed by His-417.

This sequence belongs to the histidinol dehydrogenase family. The cofactor is Zn(2+).

The catalysed reaction is L-histidinol + 2 NAD(+) + H2O = L-histidine + 2 NADH + 3 H(+). It participates in amino-acid biosynthesis; L-histidine biosynthesis; L-histidine from 5-phospho-alpha-D-ribose 1-diphosphate: step 9/9. In terms of biological role, catalyzes the sequential NAD-dependent oxidations of L-histidinol to L-histidinaldehyde and then to L-histidine. This Trichormus variabilis (strain ATCC 29413 / PCC 7937) (Anabaena variabilis) protein is Histidinol dehydrogenase 1.